A 442-amino-acid polypeptide reads, in one-letter code: UPF0489 protein C5orf22 (442 aa).

The disordered stretch occupies residues 175–210 (SSAKKPKLALEDSENTASTNCDSSSEGLEKDTATQR). Polar residues predominate over residues 189–200 (NTASTNCDSSSE).

The protein belongs to the UPF0489 family.

The sequence is that of UPF0489 protein C5orf22 (C5orf22) from Homo sapiens (Human).